A 363-amino-acid polypeptide reads, in one-letter code: UDP-N-acetylglucosamine--N-acetylmuramyl-(pentapeptide) pyrophosphoryl-undecaprenol N-acetylglucosamine transferase (363 aa).

Residues 14-16 (TGG), Asn-122, Arg-163, Ser-190, and Gln-285 each bind UDP-N-acetyl-alpha-D-glucosamine.

This sequence belongs to the glycosyltransferase 28 family. MurG subfamily.

Its subcellular location is the cell inner membrane. It carries out the reaction di-trans,octa-cis-undecaprenyl diphospho-N-acetyl-alpha-D-muramoyl-L-alanyl-D-glutamyl-meso-2,6-diaminopimeloyl-D-alanyl-D-alanine + UDP-N-acetyl-alpha-D-glucosamine = di-trans,octa-cis-undecaprenyl diphospho-[N-acetyl-alpha-D-glucosaminyl-(1-&gt;4)]-N-acetyl-alpha-D-muramoyl-L-alanyl-D-glutamyl-meso-2,6-diaminopimeloyl-D-alanyl-D-alanine + UDP + H(+). The protein operates within cell wall biogenesis; peptidoglycan biosynthesis. Functionally, cell wall formation. Catalyzes the transfer of a GlcNAc subunit on undecaprenyl-pyrophosphoryl-MurNAc-pentapeptide (lipid intermediate I) to form undecaprenyl-pyrophosphoryl-MurNAc-(pentapeptide)GlcNAc (lipid intermediate II). The polypeptide is UDP-N-acetylglucosamine--N-acetylmuramyl-(pentapeptide) pyrophosphoryl-undecaprenol N-acetylglucosamine transferase (Prochlorococcus marinus (strain MIT 9301)).